The sequence spans 538 residues: Phosphoenolpyruvate carboxykinase (ATP) (538 aa).

Residues Arg61, Tyr195, and Lys201 each contribute to the substrate site. ATP-binding positions include Lys201, His220, and 236–244 (GLSGTGKTT). Residues Lys201 and His220 each coordinate Mn(2+). Position 257 (Asp257) interacts with Mn(2+). ATP contacts are provided by Glu285, Arg323, and Thr449. Arg323 contacts substrate.

The protein belongs to the phosphoenolpyruvate carboxykinase (ATP) family. Mn(2+) serves as cofactor.

The protein localises to the cytoplasm. It carries out the reaction oxaloacetate + ATP = phosphoenolpyruvate + ADP + CO2. It functions in the pathway carbohydrate biosynthesis; gluconeogenesis. Involved in the gluconeogenesis. Catalyzes the conversion of oxaloacetate (OAA) to phosphoenolpyruvate (PEP) through direct phosphoryl transfer between the nucleoside triphosphate and OAA. The sequence is that of Phosphoenolpyruvate carboxykinase (ATP) from Nitrobacter hamburgensis (strain DSM 10229 / NCIMB 13809 / X14).